Here is a 176-residue protein sequence, read N- to C-terminus: NAD(P)H-quinone oxidoreductase subunit 6, chloroplastic (176 aa).

A run of 5 helical transmembrane segments spans residues 10-30 (ILLV…VLFT), 32-52 (PIFS…FHIL), 61-81 (AQLL…VMFM), 92-112 (LWTV…FSLI), and 152-172 (FYLP…GAIA).

It belongs to the complex I subunit 6 family. In terms of assembly, NDH is composed of at least 16 different subunits, 5 of which are encoded in the nucleus.

The protein resides in the plastid. It localises to the chloroplast thylakoid membrane. It catalyses the reaction a plastoquinone + NADH + (n+1) H(+)(in) = a plastoquinol + NAD(+) + n H(+)(out). It carries out the reaction a plastoquinone + NADPH + (n+1) H(+)(in) = a plastoquinol + NADP(+) + n H(+)(out). NDH shuttles electrons from NAD(P)H:plastoquinone, via FMN and iron-sulfur (Fe-S) centers, to quinones in the photosynthetic chain and possibly in a chloroplast respiratory chain. The immediate electron acceptor for the enzyme in this species is believed to be plastoquinone. Couples the redox reaction to proton translocation, and thus conserves the redox energy in a proton gradient. This chain is NAD(P)H-quinone oxidoreductase subunit 6, chloroplastic (ndhG), found in Drimys granadensis.